A 550-amino-acid polypeptide reads, in one-letter code: CTP synthase (550 aa).

Positions 1-270 are amidoligase domain; that stretch reads MTKFVFVTGG…DRLICEELRL (270 aa). Ser13 provides a ligand contact to CTP. A UTP-binding site is contributed by Ser13. ATP is bound by residues 14–19 and Asp71; that span reads SLGKGI. Mg(2+) is bound by residues Asp71 and Glu144. CTP is bound by residues 151-153, 191-196, and Lys227; these read DIE and KTKPTQ. UTP contacts are provided by residues 191–196 and Lys227; that span reads KTKPTQ. A Glutamine amidotransferase type-1 domain is found at 295–547; sequence TIGMVGKYVD…VEAALASQQR (253 aa). Gly356 contacts L-glutamine. Cys383 functions as the Nucleophile; for glutamine hydrolysis in the catalytic mechanism. Residues 384 to 387, Glu407, and Arg473 each bind L-glutamine; that span reads LGMQ. Active-site residues include His520 and Glu522.

This sequence belongs to the CTP synthase family. Homotetramer.

The enzyme catalyses UTP + L-glutamine + ATP + H2O = CTP + L-glutamate + ADP + phosphate + 2 H(+). The catalysed reaction is L-glutamine + H2O = L-glutamate + NH4(+). It carries out the reaction UTP + NH4(+) + ATP = CTP + ADP + phosphate + 2 H(+). It participates in pyrimidine metabolism; CTP biosynthesis via de novo pathway; CTP from UDP: step 2/2. With respect to regulation, allosterically activated by GTP, when glutamine is the substrate; GTP has no effect on the reaction when ammonia is the substrate. The allosteric effector GTP functions by stabilizing the protein conformation that binds the tetrahedral intermediate(s) formed during glutamine hydrolysis. Inhibited by the product CTP, via allosteric rather than competitive inhibition. Its function is as follows. Catalyzes the ATP-dependent amination of UTP to CTP with either L-glutamine or ammonia as the source of nitrogen. Regulates intracellular CTP levels through interactions with the four ribonucleotide triphosphates. This chain is CTP synthase, found in Cupriavidus necator (strain ATCC 17699 / DSM 428 / KCTC 22496 / NCIMB 10442 / H16 / Stanier 337) (Ralstonia eutropha).